We begin with the raw amino-acid sequence, 121 residues long: Small ribosomal subunit protein uS13 (121 aa).

The disordered stretch occupies residues 93–121; it reads RGLPMRGQRTRTNARTRKGPRKGAAALKK.

It belongs to the universal ribosomal protein uS13 family. As to quaternary structure, part of the 30S ribosomal subunit. Forms a loose heterodimer with protein S19. Forms two bridges to the 50S subunit in the 70S ribosome.

Located at the top of the head of the 30S subunit, it contacts several helices of the 16S rRNA. In the 70S ribosome it contacts the 23S rRNA (bridge B1a) and protein L5 of the 50S subunit (bridge B1b), connecting the 2 subunits; these bridges are implicated in subunit movement. Contacts the tRNAs in the A and P-sites. The chain is Small ribosomal subunit protein uS13 from Paracidovorax citrulli (strain AAC00-1) (Acidovorax citrulli).